The sequence spans 253 residues: Sortase SrtE2 (253 aa).

Residues 1 to 11 are compositionally biased toward basic and acidic residues; that stretch reads MAATTDTEHQE. The interval 1-23 is disordered; sequence MAATTDTEHQEQAGTGGRGRRRP. Residues 30 to 50 form a helical membrane-spanning segment; that stretch reads AVSVLGELLITAGLVMGLFVV. The disordered stretch occupies residues 69–89; it reads EKVRDDWAQDRVGGSGQDGPG. Residue C220 is part of the active site.

This sequence belongs to the bacterial sortase family. Class E subfamily.

Its subcellular location is the cell membrane. The enzyme catalyses The enzyme catalyzes a cell wall sorting reaction in which a surface protein with a sorting signal containing a LPXTG motif is cleaved between the Thr and Gly residue. The resulting threonine carboxyl end of the protein is covalently attached to a pentaglycine cross-bridge of peptidoglycan.. In terms of biological role, transpeptidase that anchors surface proteins to the cell wall. Recognizes Leu-Ala-x-Thr-Gly and Leu-Pro-x-Thr-Gly, with a preference for the former. Unlike the S.aureus sortase it cleaves not only the Thr-Gly motif but also the Ala-X bond; an Ala-Glu bond is a better substrate than the Thr-Gly motif in vitro. Among its possible substrates are the chaplins ChpA, ChpB and ChpC; this enzyme is more important for ChpC attachment than is SrtE1. A double knockout mutant of srtE1 and srtE2 shows a developmental defect in aerial hyphae formation more dramatic than that due to chaplin deletion. This chain is Sortase SrtE2, found in Streptomyces coelicolor (strain ATCC BAA-471 / A3(2) / M145).